The sequence spans 142 residues: Large ribosomal subunit protein uL11 (142 aa).

Belongs to the universal ribosomal protein uL11 family. Part of the ribosomal stalk of the 50S ribosomal subunit. Interacts with L10 and the large rRNA to form the base of the stalk. L10 forms an elongated spine to which L12 dimers bind in a sequential fashion forming a multimeric L10(L12)X complex. One or more lysine residues are methylated.

Its function is as follows. Forms part of the ribosomal stalk which helps the ribosome interact with GTP-bound translation factors. The protein is Large ribosomal subunit protein uL11 of Pelotomaculum thermopropionicum (strain DSM 13744 / JCM 10971 / SI).